The primary structure comprises 112 residues: MAAALARLGLRPVKQVRVQFCPFEKNVESTRTFLQTVSSEKVRSTNLNCSVIADVRHDGSEPCVDVLFGDGHRLIMRGAHLTALEMLTAFASHIRARDAAGSGDKPGADTGR.

The protein belongs to the mitochondrion-specific ribosomal protein mL53 family. In terms of assembly, component of the mitochondrial large ribosomal subunit (mt-LSU). Mature mammalian 55S mitochondrial ribosomes consist of a small (28S) and a large (39S) subunit. The 28S small subunit contains a 12S ribosomal RNA (12S mt-rRNA) and 30 different proteins. The 39S large subunit contains a 16S rRNA (16S mt-rRNA), a copy of mitochondrial valine transfer RNA (mt-tRNA(Val)), which plays an integral structural role, and 52 different proteins. mL53 is located at the L7/L12 stalk.

It is found in the mitochondrion. This is Large ribosomal subunit protein mL53 (MRPL53) from Homo sapiens (Human).